An 875-amino-acid chain; its full sequence is Protein translocase subunit SecA (875 aa).

ATP is bound by residues Gln87, 105–109, and Asp512; that span reads GEGKT. 4 residues coordinate Zn(2+): Cys860, Cys862, Cys871, and His872.

Belongs to the SecA family. In terms of assembly, monomer and homodimer. Part of the essential Sec protein translocation apparatus which comprises SecA, SecYEG and auxiliary proteins SecDF-YajC and YidC. Requires Zn(2+) as cofactor.

The protein resides in the cell inner membrane. It is found in the cytoplasm. The catalysed reaction is ATP + H2O + cellular proteinSide 1 = ADP + phosphate + cellular proteinSide 2.. In terms of biological role, part of the Sec protein translocase complex. Interacts with the SecYEG preprotein conducting channel. Has a central role in coupling the hydrolysis of ATP to the transfer of proteins into and across the cell membrane, serving both as a receptor for the preprotein-SecB complex and as an ATP-driven molecular motor driving the stepwise translocation of polypeptide chains across the membrane. The sequence is that of Protein translocase subunit SecA from Buchnera aphidicola subsp. Acyrthosiphon pisum (strain APS) (Acyrthosiphon pisum symbiotic bacterium).